The primary structure comprises 164 residues: R-phycoerythrin alpha chain (164 aa).

Residues N47, K81, C82, R84, H88, R137, C139, and R142 each contribute to the (2R,3E)-phycoerythrobilin site.

It belongs to the phycobiliprotein family. In terms of assembly, heterododecamer of 6 alpha and 6 beta chains. The basic functional unit of phycobiliproteins is a ring-shaped hexamer formed from two back-to-back trimers contacting via the alpha chain subunits. The trimers are composed of alpha/beta subunit heterodimers arranged around a three-fold axis of symmetry. The phycoerythrins also contain a gamma subunit which is located in the center of the hexamer. Contains two covalently linked phycoerythrobilin chromophores. In PubMed:8876649 the authors refer to the bilins as phycoerythrobilins. In the PDB entries, the bilins are named as phycocyanobilins although the modeled compounds correspond to phycoerythrobilins.

Its subcellular location is the plastid. It is found in the chloroplast thylakoid membrane. In terms of biological role, light-harvesting photosynthetic tetrapyrrole chromophore-protein from the phycobiliprotein complex. This is R-phycoerythrin alpha chain (cpeA) from Polysiphonia urceolata (Red alga).